A 332-amino-acid polypeptide reads, in one-letter code: Adenosine receptor A2b (332 aa).

Residues 1 to 8 (MQLETQDA) lie on the Extracellular side of the membrane. A helical membrane pass occupies residues 9-33 (LYVALELAIAALSVAGNVLVCAAVG). The Cytoplasmic portion of the chain corresponds to 34 to 43 (TSSALQTPTN). The helical transmembrane segment at 44-67 (YFLVSLAAADVAVGLFAIPFAITI) threads the bilayer. Topologically, residues 68 to 78 (SLGFCTDFHSC) are extracellular. C78 and C170 form a disulfide bridge. Residues 79 to 101 (LFLACFVLVLTQSSIFSLLAVAV) form a helical membrane-spanning segment. The Cytoplasmic portion of the chain corresponds to 102–121 (DRYLAIRVPLRYKSLVTGTR). Residues 122–144 (ARGVIAVLWVLAFGIGLTPFLGW) traverse the membrane as a helical segment. Over 145 to 177 (NSKDSATNCTEPWDGTTNESCCLVKCLFENVVP) the chain is Extracellular. 2 N-linked (GlcNAc...) asparagine glycosylation sites follow: N152 and N162. E173 contacts adenosine. Residues 178–202 (MSYMVYFNFFGCVLPPLLIMLVIYI) form a helical membrane-spanning segment. Over 203–234 (KIFMVACKQLQRTELVDHSRTVIQREIHAAKS) the chain is Cytoplasmic. The helical transmembrane segment at 235 to 258 (LAMIVGIFALCWLPVHAINCVTLF) threads the bilayer. N253 serves as a coordination point for adenosine. Topologically, residues 259–266 (QPARAKDK) are extracellular. A helical transmembrane segment spans residues 267–290 (PKWAMNMAILLSHASSVVNPIVYA). The adenosine site is built by S278 and H279. Residues 291 to 332 (YRNRDFRYTFHKIISRYVLCQTDVLKSGNGQAGTQSALDVGL) are Cytoplasmic-facing. C310 carries S-palmitoyl cysteine lipidation.

Belongs to the G-protein coupled receptor 1 family.

The protein localises to the cell membrane. Functionally, receptor for adenosine. The activity of this receptor is mediated by G proteins which activate adenylyl cyclase. The protein is Adenosine receptor A2b (ADORA2B) of Canis lupus familiaris (Dog).